A 523-amino-acid chain; its full sequence is Glycerate kinase (523 aa).

A Phosphoserine modification is found at serine 60. Position 200 is an N6-acetyllysine (lysine 200).

Belongs to the glycerate kinase type-2 family.

It is found in the cytoplasm. The enzyme catalyses (R)-glycerate + ATP = (2R)-3-phosphoglycerate + ADP + H(+). The protein is Glycerate kinase (GLYCTK) of Bos taurus (Bovine).